The sequence spans 344 residues: Fructose-bisphosphate aldolase (344 aa).

Residue Ser53 participates in D-glyceraldehyde 3-phosphate binding. Asp95 acts as the Proton donor in catalysis. 4 residues coordinate Zn(2+): His96, Asp131, Glu161, and His212. Residue Gly213 participates in dihydroxyacetone phosphate binding. His252 provides a ligand contact to Zn(2+). Dihydroxyacetone phosphate-binding positions include 253–255 (GGS) and 274–277 (NVDT).

Belongs to the class II fructose-bisphosphate aldolase family. The cofactor is Zn(2+).

It carries out the reaction beta-D-fructose 1,6-bisphosphate = D-glyceraldehyde 3-phosphate + dihydroxyacetone phosphate. It participates in carbohydrate degradation; glycolysis; D-glyceraldehyde 3-phosphate and glycerone phosphate from D-glucose: step 4/4. Catalyzes the aldol condensation of dihydroxyacetone phosphate (DHAP or glycerone-phosphate) with glyceraldehyde 3-phosphate (G3P) to form fructose 1,6-bisphosphate (FBP) in gluconeogenesis and the reverse reaction in glycolysis. The protein is Fructose-bisphosphate aldolase (fba) of Mycobacterium bovis (strain ATCC BAA-935 / AF2122/97).